A 65-amino-acid polypeptide reads, in one-letter code: Metallothionein-B (65 aa).

Belongs to the metallothionein superfamily. Type 4 family.

Functionally, metallothioneins have a high content of cysteine residues that bind various heavy metals. The sequence is that of Metallothionein-B (MTB1) from Strongylocentrotus purpuratus (Purple sea urchin).